The sequence spans 925 residues: Isoleucine--tRNA ligase (925 aa).

A 'HIGH' region motif is present at residues 57 to 67; it reads PYANGDIHIGH. E553 contacts L-isoleucyl-5'-AMP. Residues 594-598 carry the 'KMSKS' region motif; it reads KMSKS. K597 contributes to the ATP binding site. Zn(2+)-binding residues include C889, C892, C909, and C912.

This sequence belongs to the class-I aminoacyl-tRNA synthetase family. IleS type 1 subfamily. As to quaternary structure, monomer. It depends on Zn(2+) as a cofactor.

Its subcellular location is the cytoplasm. The catalysed reaction is tRNA(Ile) + L-isoleucine + ATP = L-isoleucyl-tRNA(Ile) + AMP + diphosphate. Catalyzes the attachment of isoleucine to tRNA(Ile). As IleRS can inadvertently accommodate and process structurally similar amino acids such as valine, to avoid such errors it has two additional distinct tRNA(Ile)-dependent editing activities. One activity is designated as 'pretransfer' editing and involves the hydrolysis of activated Val-AMP. The other activity is designated 'posttransfer' editing and involves deacylation of mischarged Val-tRNA(Ile). In Brevibacillus brevis (strain 47 / JCM 6285 / NBRC 100599), this protein is Isoleucine--tRNA ligase.